A 235-amino-acid polypeptide reads, in one-letter code: Large ribosomal subunit protein uL1 (235 aa).

Belongs to the universal ribosomal protein uL1 family. Part of the 50S ribosomal subunit.

Its function is as follows. Binds directly to 23S rRNA. The L1 stalk is quite mobile in the ribosome, and is involved in E site tRNA release. In terms of biological role, protein L1 is also a translational repressor protein, it controls the translation of the L11 operon by binding to its mRNA. The chain is Large ribosomal subunit protein uL1 from Mycobacterium marinum (strain ATCC BAA-535 / M).